Reading from the N-terminus, the 336-residue chain is Terephthalate 1,2-dioxygenase, reductase component 2 (336 aa).

The region spanning 3-91 (HQIHIHDSDI…DIRIHPSSFR (89 aa)) is the 2Fe-2S ferredoxin-type domain. 4 residues coordinate [2Fe-2S] cluster: Cys37, Cys42, Cys45, and Cys75. The 100-residue stretch at 98-197 (RKRFTAKVYS…ELPFGSIALK (100 aa)) folds into the FAD-binding FR-type domain.

Monomer. Part of a multicomponent enzyme system composed of a reductase (TphA1I or TphA1II) and a two-subunit oxygenase component (TphA2I or TphA2II and TphA3I or TphA3II). It depends on FAD as a cofactor. Requires [2Fe-2S] cluster as cofactor.

It catalyses the reaction terephthalate + NADH + O2 + H(+) = (3S,4R)-3,4-dihydroxycyclohexa-1,5-diene-1,4-dicarboxylate + NAD(+). Functionally, component of the terephthalate 1,2-dioxygenase multicomponent enzyme system which catalyzes the dioxygenation of terephthalate (TER/TPA) to 1,2-dihydroxy-3,5-cyclohexadiene-1,4-dicarboxylic acid (DCD). TphA1 probably reduces TphA2A3. It can also use 2,5-dicarboxypyridine (PDC) and 1,4-napthalenedicarboxylic acid (NDC) as substrates, and preferentially uses NADPH which is the physiological electron donor. The sequence is that of Terephthalate 1,2-dioxygenase, reductase component 2 (tphA1II) from Comamonas sp.